A 357-amino-acid chain; its full sequence is Peptide chain release factor 1 (357 aa).

Gln232 carries the N5-methylglutamine modification.

This sequence belongs to the prokaryotic/mitochondrial release factor family. Methylated by PrmC. Methylation increases the termination efficiency of RF1.

Its subcellular location is the cytoplasm. In terms of biological role, peptide chain release factor 1 directs the termination of translation in response to the peptide chain termination codons UAG and UAA. The protein is Peptide chain release factor 1 of Maridesulfovibrio salexigens (strain ATCC 14822 / DSM 2638 / NCIMB 8403 / VKM B-1763) (Desulfovibrio salexigens).